Consider the following 259-residue polypeptide: UPF0246 protein SG0407 (259 aa).

Belongs to the UPF0246 family.

The sequence is that of UPF0246 protein SG0407 from Sodalis glossinidius (strain morsitans).